Here is a 311-residue protein sequence, read N- to C-terminus: Coproporphyrin III ferrochelatase (311 aa).

Residues Tyr-12, Arg-29, 45–46 (RY), Ser-53, and Tyr-124 each bind Fe-coproporphyrin III. Positions 182 and 263 each coordinate Fe(2+).

Belongs to the ferrochelatase family.

It is found in the cytoplasm. It carries out the reaction Fe-coproporphyrin III + 2 H(+) = coproporphyrin III + Fe(2+). Its pathway is porphyrin-containing compound metabolism; protoheme biosynthesis. In terms of biological role, involved in coproporphyrin-dependent heme b biosynthesis. Catalyzes the insertion of ferrous iron into coproporphyrin III to form Fe-coproporphyrin III. The polypeptide is Coproporphyrin III ferrochelatase (Bacillus mycoides (strain KBAB4) (Bacillus weihenstephanensis)).